Reading from the N-terminus, the 325-residue chain is Putative ankyrin repeat protein RF_0011 (325 aa).

ANK repeat units follow at residues 63 to 94, 99 to 130, and 134 to 164; these read NGNT…AINM, RGQP…NINA, and CGRT…EMII.

This chain is Putative ankyrin repeat protein RF_0011, found in Rickettsia felis (strain ATCC VR-1525 / URRWXCal2) (Rickettsia azadi).